The sequence spans 143 residues: Nucleoside diphosphate kinase (143 aa).

Positions 11, 59, 87, 93, 104, and 114 each coordinate ATP. Catalysis depends on histidine 117, which acts as the Pros-phosphohistidine intermediate.

Belongs to the NDK family. As to quaternary structure, homotetramer. Requires Mg(2+) as cofactor.

The protein localises to the cytoplasm. It carries out the reaction a 2'-deoxyribonucleoside 5'-diphosphate + ATP = a 2'-deoxyribonucleoside 5'-triphosphate + ADP. The enzyme catalyses a ribonucleoside 5'-diphosphate + ATP = a ribonucleoside 5'-triphosphate + ADP. Functionally, major role in the synthesis of nucleoside triphosphates other than ATP. The ATP gamma phosphate is transferred to the NDP beta phosphate via a ping-pong mechanism, using a phosphorylated active-site intermediate. The protein is Nucleoside diphosphate kinase of Enterobacter sp. (strain 638).